We begin with the raw amino-acid sequence, 117 residues long: Fluoride-specific ion channel FluC 2 (117 aa).

The next 4 membrane-spanning stretches (helical) occupy residues 1-21, 33-53, 60-80, and 95-115; these read MISIILVMIGGGFGAIARSAI, LPIATLIVNLVGSFLIGLTIG, WFPAFFVTGFLGGLTTFSTLA, and LFLNYSLLQFIIGFIACYIGY. Na(+)-binding residues include Gly-71 and Thr-74.

The protein belongs to the fluoride channel Fluc/FEX (TC 1.A.43) family.

The protein localises to the cell membrane. The catalysed reaction is fluoride(in) = fluoride(out). Its activity is regulated as follows. Na(+) is not transported, but it plays an essential structural role and its presence is essential for fluoride channel function. Functionally, fluoride-specific ion channel. Important for reducing fluoride concentration in the cell, thus reducing its toxicity. The protein is Fluoride-specific ion channel FluC 2 of Staphylococcus aureus (strain COL).